The primary structure comprises 179 residues: Bifunctional protein PyrR (179 aa).

The PRPP-binding signature appears at V99–T111.

Belongs to the purine/pyrimidine phosphoribosyltransferase family. PyrR subfamily. Homodimer and homohexamer; in equilibrium.

The enzyme catalyses UMP + diphosphate = 5-phospho-alpha-D-ribose 1-diphosphate + uracil. Regulates transcriptional attenuation of the pyrimidine nucleotide (pyr) operon by binding in a uridine-dependent manner to specific sites on pyr mRNA. This disrupts an antiterminator hairpin in the RNA and favors formation of a downstream transcription terminator, leading to a reduced expression of downstream genes. Functionally, also displays a weak uracil phosphoribosyltransferase activity which is not physiologically significant. The protein is Bifunctional protein PyrR of Brevibacillus brevis (strain 47 / JCM 6285 / NBRC 100599).